We begin with the raw amino-acid sequence, 400 residues long: Large envelope protein (400 aa).

Residue methionine 1 is modified to N-acetylmethionine. Glycine 2 is lipidated: N-myristoyl glycine; by host. The tract at residues 2–119 (GAPLSTARRG…PPLRDTHPQA (118 aa)) is pre-S1. Residues 2–174 (GAPLSTARRG…FSKTGDPAMN (173 aa)) form a pre-S region. Residues 2–181 (GAPLSTARRG…AMNMENITSG (180 aa)) lie on the Virion surface; in external conformation side of the membrane. The Intravirion; in internal conformation portion of the chain corresponds to 2–253 (GAPLSTARRG…PGYRWMCLRR (252 aa)). N-linked (GlcNAc...) asparagine glycosylation is present at proline 4. A disordered region spans residues 70 to 115 (PHGGLLGWSPQAQGILTTSPPDPPPASTNRRSGRKPTPVSPPLRDT). Residues 79-88 (PQAQGILTTS) are compositionally biased toward polar residues. Positions 120-174 (MQWNSTQFHQALLDPRVRGLYLPAGGSSSETQNPVPTIASLTSSIFSKTGDPAMN) are pre-S2. A helical membrane pass occupies residues 182-202 (LLGPLLVLQAVCFLLTKILTI). Topologically, residues 203–253 (PQSLDSWWTSLNFLGVPPGCPGQNSQSPISNHLPTSCPPTCPGYRWMCLRR) are intravirion; in external conformation. The chain crosses the membrane as a helical span at residues 254–274 (FIIFLFILLLCLIFLLVLLDY). Over 275-348 (QGMLPVCPLL…WASARFSWLS (74 aa)) the chain is Virion surface. Asparagine 320 carries N-linked (GlcNAc...) asparagine; by host glycosylation. Residues 349–369 (LLVQFVQWCVGLSPTVWLLVI) traverse the membrane as a helical segment. The Intravirion portion of the chain corresponds to 370 to 375 (WMIWYW). The chain crosses the membrane as a helical span at residues 376–398 (GPNLCSILSPFIPLLPIFCYLWA). Over 399-400 (SI) the chain is Virion surface.

The protein belongs to the orthohepadnavirus major surface antigen family. As to quaternary structure, in its internal form (Li-HBsAg), interacts with the capsid protein and with the isoform S. Interacts with host chaperone CANX. Associates with host chaperone CANX through its pre-S2 N glycan; this association may be essential for isoform M proper secretion. In terms of assembly, interacts with isoform L. Interacts with the antigens of satellite virus HDV (HDVAgs); this interaction is required for encapsidation of HDV genomic RNA. In terms of processing, isoform M is N-terminally acetylated by host at a ratio of 90%, and N-glycosylated by host at the pre-S2 region. Myristoylated.

Its subcellular location is the virion membrane. In terms of biological role, the large envelope protein exists in two topological conformations, one which is termed 'external' or Le-HBsAg and the other 'internal' or Li-HBsAg. In its external conformation the protein attaches the virus to cell receptors and thereby initiating infection. This interaction determines the species specificity and liver tropism. This attachment induces virion internalization predominantly through caveolin-mediated endocytosis. The large envelope protein also assures fusion between virion membrane and endosomal membrane. In its internal conformation the protein plays a role in virion morphogenesis and mediates the contact with the nucleocapsid like a matrix protein. Its function is as follows. The middle envelope protein plays an important role in the budding of the virion. It is involved in the induction of budding in a nucleocapsid independent way. In this process the majority of envelope proteins bud to form subviral lipoprotein particles of 22 nm of diameter that do not contain a nucleocapsid. The protein is Large envelope protein of Hepatitis B virus genotype H subtype adw4 (isolate Nicaragua/2928Nic/1997) (HBV-H).